The following is a 163-amino-acid chain: Nucleotide-binding protein YajQ (163 aa).

Belongs to the YajQ family.

In terms of biological role, nucleotide-binding protein. In Salmonella typhi, this protein is Nucleotide-binding protein YajQ.